Consider the following 289-residue polypeptide: Pantoate kinase (289 aa).

It belongs to the GHMP kinase family. PoK subfamily.

The enzyme catalyses (R)-pantoate + ATP = (R)-4-phosphopantoate + ADP + H(+). It functions in the pathway cofactor biosynthesis; coenzyme A biosynthesis. Phosphorylates (R)-pantoate to form (R)-4-phosphopantoate in the CoA biosynthesis pathway. ATP is the best phosphate donor. Can be replaced with UTP, with lower efficiency. This is Pantoate kinase from Methanospirillum hungatei JF-1 (strain ATCC 27890 / DSM 864 / NBRC 100397 / JF-1).